The following is a 405-amino-acid chain: Tryptophan synthase beta chain (405 aa).

Lys-98 is modified (N6-(pyridoxal phosphate)lysine).

It belongs to the TrpB family. Tetramer of two alpha and two beta chains. Requires pyridoxal 5'-phosphate as cofactor.

The enzyme catalyses (1S,2R)-1-C-(indol-3-yl)glycerol 3-phosphate + L-serine = D-glyceraldehyde 3-phosphate + L-tryptophan + H2O. It participates in amino-acid biosynthesis; L-tryptophan biosynthesis; L-tryptophan from chorismate: step 5/5. In terms of biological role, the beta subunit is responsible for the synthesis of L-tryptophan from indole and L-serine. This is Tryptophan synthase beta chain from Xylella fastidiosa (strain M12).